We begin with the raw amino-acid sequence, 122 residues long: Large ribosomal subunit protein uL14 (122 aa).

Belongs to the universal ribosomal protein uL14 family. In terms of assembly, part of the 50S ribosomal subunit. Forms a cluster with proteins L3 and L19. In the 70S ribosome, L14 and L19 interact and together make contacts with the 16S rRNA in bridges B5 and B8.

In terms of biological role, binds to 23S rRNA. Forms part of two intersubunit bridges in the 70S ribosome. The sequence is that of Large ribosomal subunit protein uL14 from Staphylococcus epidermidis (strain ATCC 35984 / DSM 28319 / BCRC 17069 / CCUG 31568 / BM 3577 / RP62A).